The sequence spans 715 residues: Fatty acid oxidation complex subunit alpha (715 aa).

Residues 1–190 (MIYEGKAITV…KVGAVDAVVA (190 aa)) are enoyl-CoA hydratase/isomerase. D297 contacts substrate. The interval 312-715 (HDVKQAAVLG…MAKNGQRFFN (404 aa)) is 3-hydroxyacyl-CoA dehydrogenase. NAD(+) is bound by residues M325, D344, 401–403 (VVE), K408, and S430. The active-site For 3-hydroxyacyl-CoA dehydrogenase activity is H451. N454 contributes to the NAD(+) binding site. Residues N501 and Y660 each contribute to the substrate site.

This sequence in the N-terminal section; belongs to the enoyl-CoA hydratase/isomerase family. In the C-terminal section; belongs to the 3-hydroxyacyl-CoA dehydrogenase family. In terms of assembly, heterotetramer of two alpha chains (FadB) and two beta chains (FadA).

The enzyme catalyses a (3S)-3-hydroxyacyl-CoA + NAD(+) = a 3-oxoacyl-CoA + NADH + H(+). The catalysed reaction is a (3S)-3-hydroxyacyl-CoA = a (2E)-enoyl-CoA + H2O. It catalyses the reaction a 4-saturated-(3S)-3-hydroxyacyl-CoA = a (3E)-enoyl-CoA + H2O. It carries out the reaction (3S)-3-hydroxybutanoyl-CoA = (3R)-3-hydroxybutanoyl-CoA. The enzyme catalyses a (3Z)-enoyl-CoA = a 4-saturated (2E)-enoyl-CoA. The catalysed reaction is a (3E)-enoyl-CoA = a 4-saturated (2E)-enoyl-CoA. It participates in lipid metabolism; fatty acid beta-oxidation. Involved in the aerobic and anaerobic degradation of long-chain fatty acids via beta-oxidation cycle. Catalyzes the formation of 3-oxoacyl-CoA from enoyl-CoA via L-3-hydroxyacyl-CoA. It can also use D-3-hydroxyacyl-CoA and cis-3-enoyl-CoA as substrate. The chain is Fatty acid oxidation complex subunit alpha from Pseudomonas putida (strain ATCC 700007 / DSM 6899 / JCM 31910 / BCRC 17059 / LMG 24140 / F1).